Here is a 359-residue protein sequence, read N- to C-terminus: WAT1-related protein At4g16620 (359 aa).

The next 10 helical transmembrane spans lie at 5–25 (ETLIEAGIIGGLAGAQVIYAG), 41–61 (LLIVILCTFASVLLITPLAFL), 77–97 (IKLVLVALAGVTLFQGLFLEG), 105–125 (MATAMPNLCPAFIFVIAWAAG), 143–163 (TVLCVMGALIMSLMHSTTATL), 183–203 (ILGCLYLLLAICGLSSSIVLQ), 206–226 (ILAEFPAPISMFSMVSLMGGI), 246–266 (VIGLGHLVGYAILGGLVSGGG), 279–299 (PVIVSLFSPIATVVCVVVSAF), and 305–325 (FNLGSFAGMALMFGGLYFVLW). The EamA 1 domain occupies 30–154 (LSQLLSLGID…LCVMGALIMS (125 aa)). In terms of domain architecture, EamA 2 spans 206–324 (ILAEFPAPIS…LMFGGLYFVL (119 aa)).

It belongs to the drug/metabolite transporter (DMT) superfamily. Plant drug/metabolite exporter (P-DME) (TC 2.A.7.4) family.

It is found in the membrane. The chain is WAT1-related protein At4g16620 from Arabidopsis thaliana (Mouse-ear cress).